We begin with the raw amino-acid sequence, 264 residues long: Thymidylate synthase (264 aa).

Arg-21 serves as a coordination point for dUMP. His-51 lines the (6R)-5,10-methylene-5,6,7,8-tetrahydrofolate pocket. 126-127 lines the dUMP pocket; that stretch reads RR. Catalysis depends on Cys-146, which acts as the Nucleophile. DUMP-binding positions include 166–169, Asn-177, and 207–209; these read RSCD and HLY. Residue Asp-169 coordinates (6R)-5,10-methylene-5,6,7,8-tetrahydrofolate. Ala-263 contacts (6R)-5,10-methylene-5,6,7,8-tetrahydrofolate.

Belongs to the thymidylate synthase family. Bacterial-type ThyA subfamily. Homodimer.

The protein resides in the cytoplasm. It carries out the reaction dUMP + (6R)-5,10-methylene-5,6,7,8-tetrahydrofolate = 7,8-dihydrofolate + dTMP. It functions in the pathway pyrimidine metabolism; dTTP biosynthesis. Its function is as follows. Catalyzes the reductive methylation of 2'-deoxyuridine-5'-monophosphate (dUMP) to 2'-deoxythymidine-5'-monophosphate (dTMP) while utilizing 5,10-methylenetetrahydrofolate (mTHF) as the methyl donor and reductant in the reaction, yielding dihydrofolate (DHF) as a by-product. This enzymatic reaction provides an intracellular de novo source of dTMP, an essential precursor for DNA biosynthesis. The protein is Thymidylate synthase of Photorhabdus laumondii subsp. laumondii (strain DSM 15139 / CIP 105565 / TT01) (Photorhabdus luminescens subsp. laumondii).